The following is an 885-amino-acid chain: Leucine--tRNA ligase (885 aa).

The 'HIGH' region motif lies at 48-58 (PYPSGKLHMGH). The 'KMSKS' region signature appears at 639–643 (TMSKS). Lys-642 contributes to the ATP binding site.

It belongs to the class-I aminoacyl-tRNA synthetase family.

It is found in the cytoplasm. It catalyses the reaction tRNA(Leu) + L-leucine + ATP = L-leucyl-tRNA(Leu) + AMP + diphosphate. The polypeptide is Leucine--tRNA ligase (Bordetella bronchiseptica (strain ATCC BAA-588 / NCTC 13252 / RB50) (Alcaligenes bronchisepticus)).